We begin with the raw amino-acid sequence, 552 residues long: MKKNRERFSSKEREFVYKFQIGSERLELRVPLRFPVDENASHLHGRLMLLHSLPCFIENDLKEALARFIEEESLRDHDSDAEACLEAVKSGEVDLHQLASTWAKAYAETTLEHARPEEPNWDEDFADVYHDLIHSPASETLLNLEHNYFVSISELIGERDVELKKLRERQGIEMEKVMQELGKSLTDQDVNSLAAQHFESQQDLENKWSNELKQSTAIQKQEYQEWVIKLHQDLKNPNNSSLSEEIKVQPSQFRESADAAGRIYEEQRKLEESFTIHLGAQLKTMHNLRLLRADMLDFCKHKRTQGSGVKLHRLQTALSLYSTSLCGLVLLVDNRINSYSGIKRDFATVCQECTDFHFPRIEEQLEVVQQVALYARTQRRSKCKEARDSGNQNGGSDEKSKNAERNYLNILPGEFYITRHSNLSEIHVAFHLCVDDNVKSGNITARDPAIMGLRNILKVCCTHDITTISIPLLLVHDMSEEMTIPWCLRRAELVFKCVKGFMMEMASWDGGISRTVQFLVPQSISEEMFYQLSNMLPQIFRVSSTLTLTSKH.

The residue at position 79 (serine 79) is a Phosphoserine.

In terms of assembly, component of the FERRY complex composed of five subunits, TBCK, PPP1R21, FERRY3, CRYZL1 and GATD1 with a ratio of 1:2:1:2:4, respectively.

It is found in the cytoplasm. It localises to the early endosome. Component of the FERRY complex (Five-subunit Endosomal Rab5 and RNA/ribosome intermediary). The FERRY complex directly interacts with mRNAs and RAB5A, and functions as a RAB5A effector involved in the localization and the distribution of specific mRNAs most likely by mediating their endosomal transport. The complex recruits mRNAs and ribosomes to early endosomes through direct mRNA-interaction. Plays a role in mast cell degranulation. The chain is FERRY endosomal RAB5 effector complex subunit 3 from Rattus norvegicus (Rat).